Reading from the N-terminus, the 2285-residue chain is Protein Ycf2 (2285 aa).

An ATP-binding site is contributed by 1638 to 1645; it reads GSIGTGRS.

It belongs to the Ycf2 family.

The protein resides in the plastid. It localises to the chloroplast stroma. Functionally, probable ATPase of unknown function. Its presence in a non-photosynthetic plant (Epifagus virginiana) and experiments in tobacco indicate that it has an essential function which is probably not related to photosynthesis. This chain is Protein Ycf2, found in Populus trichocarpa (Western balsam poplar).